Reading from the N-terminus, the 116-residue chain is Transcription initiation factor IIA subunit 2 (116 aa).

This sequence belongs to the TFIIA subunit 2 family. In terms of assembly, TFIIA is a heterodimer composed of the large TOA1 and the small TOA2 subunits.

The protein resides in the nucleus. Its function is as follows. TFIIA is a component of the transcription machinery of RNA polymerase II and plays an important role in transcriptional activation. TFIIA in a complex with tbp mediates transcriptional activity. The sequence is that of Transcription initiation factor IIA subunit 2 (TOA2) from Pyricularia oryzae (strain 70-15 / ATCC MYA-4617 / FGSC 8958) (Rice blast fungus).